Reading from the N-terminus, the 273-residue chain is Dermonecrotic toxin LamSicTox-alphaIC1 (273 aa).

The active site involves H5. Positions 25 and 27 each coordinate Mg(2+). The active-site Nucleophile is the H41. 2 disulfide bridges follow: C45–C51 and C47–C190. D85 contacts Mg(2+).

The protein belongs to the arthropod phospholipase D family. Class II subfamily. Mg(2+) serves as cofactor. As to expression, expressed by the venom gland.

The protein resides in the secreted. The enzyme catalyses an N-(acyl)-sphingosylphosphocholine = an N-(acyl)-sphingosyl-1,3-cyclic phosphate + choline. It catalyses the reaction an N-(acyl)-sphingosylphosphoethanolamine = an N-(acyl)-sphingosyl-1,3-cyclic phosphate + ethanolamine. It carries out the reaction a 1-acyl-sn-glycero-3-phosphocholine = a 1-acyl-sn-glycero-2,3-cyclic phosphate + choline. The catalysed reaction is a 1-acyl-sn-glycero-3-phosphoethanolamine = a 1-acyl-sn-glycero-2,3-cyclic phosphate + ethanolamine. Dermonecrotic toxins cleave the phosphodiester linkage between the phosphate and headgroup of certain phospholipids (sphingolipid and lysolipid substrates), forming an alcohol (often choline) and a cyclic phosphate. This toxin acts on sphingomyelin (SM). It may also act on ceramide phosphoethanolamine (CPE), lysophosphatidylcholine (LPC) and lysophosphatidylethanolamine (LPE), but not on lysophosphatidylserine (LPS), and lysophosphatidylglycerol (LPG). It acts by transphosphatidylation, releasing exclusively cyclic phosphate products as second products. Induces dermonecrosis, hemolysis, increased vascular permeability, edema, inflammatory response, and platelet aggregation. The sequence is that of Dermonecrotic toxin LamSicTox-alphaIC1 from Loxosceles amazonica (Recluse spider).